Consider the following 446-residue polypeptide: Tubulin beta-1 chain (446 aa).

The MREI motif signature appears at 1–4; that stretch reads MREI. Positions 11, 69, 138, 142, 143, 144, 204, and 226 each coordinate GTP. E69 contributes to the Mg(2+) binding site. The tract at residues 426 to 446 is disordered; it reads QDATAEEEGEFEEEGEYEDGA. The segment covering 429 to 446 has biased composition (acidic residues); the sequence is TAEEEGEFEEEGEYEDGA. E438 bears the 5-glutamyl polyglutamate mark.

The protein belongs to the tubulin family. In terms of assembly, dimer of alpha and beta chains. A typical microtubule is a hollow water-filled tube with an outer diameter of 25 nm and an inner diameter of 15 nM. Alpha-beta heterodimers associate head-to-tail to form protofilaments running lengthwise along the microtubule wall with the beta-tubulin subunit facing the microtubule plus end conferring a structural polarity. Microtubules usually have 13 protofilaments but different protofilament numbers can be found in some organisms and specialized cells. Mg(2+) serves as cofactor. Some glutamate residues at the C-terminus are polyglycylated, resulting in polyglycine chains on the gamma-carboxyl group. Glycylation is mainly limited to tubulin incorporated into axonemes (cilia and flagella) whereas glutamylation is prevalent in neuronal cells, centrioles, axonemes, and the mitotic spindle. Both modifications can coexist on the same protein on adjacent residues, and lowering polyglycylation levels increases polyglutamylation, and reciprocally. The precise function of polyglycylation is still unclear. Post-translationally, some glutamate residues at the C-terminus are polyglutamylated, resulting in polyglutamate chains on the gamma-carboxyl group. Polyglutamylation plays a key role in microtubule severing by spastin (SPAST). SPAST preferentially recognizes and acts on microtubules decorated with short polyglutamate tails: severing activity by SPAST increases as the number of glutamates per tubulin rises from one to eight, but decreases beyond this glutamylation threshold. Brain.

It is found in the cytoplasm. The protein localises to the cytoskeleton. Tubulin is the major constituent of microtubules, a cylinder consisting of laterally associated linear protofilaments composed of alpha- and beta-tubulin heterodimers. Microtubules grow by the addition of GTP-tubulin dimers to the microtubule end, where a stabilizing cap forms. Below the cap, tubulin dimers are in GDP-bound state, owing to GTPase activity of alpha-tubulin. This chain is Tubulin beta-1 chain (tubb1), found in Notothenia neglecta (Yellowbelly rockcod).